The sequence spans 317 residues: uncharacterized protein (317 aa).

The HTH lysR-type domain occupies 1 to 60 (MKHELSSMKAFVILAESSSFNNAAKLLNITQPALTRRIKKMEEDLHVQLFERTTRKVTLT). The segment at residues 20–40 (FNNAAKLLNITQPALTRRIKK) is a DNA-binding region (H-T-H motif).

Belongs to the LysR transcriptional regulatory family.

This is an uncharacterized protein from Escherichia coli (strain K12).